The chain runs to 116 residues: MDKKTSRLRRALRGRKKIQELGVNRLVVHRTPRHTYAQVISPDSQVLASASTAEKAVTEQLKYTGNVDAAKVVGKTVAERAIEKGVTVVAFDRSGFKYHGRVAALADAAREAGLKF.

It belongs to the universal ribosomal protein uL18 family. As to quaternary structure, part of the 50S ribosomal subunit; part of the 5S rRNA/L5/L18/L25 subcomplex. Contacts the 5S and 23S rRNAs.

This is one of the proteins that bind and probably mediate the attachment of the 5S RNA into the large ribosomal subunit, where it forms part of the central protuberance. The chain is Large ribosomal subunit protein uL18 from Shewanella woodyi (strain ATCC 51908 / MS32).